A 210-amino-acid polypeptide reads, in one-letter code: Cell division protein SepF (210 aa).

The tract at residues 13-101 (GLADGDEYDE…EPVDPGYRAP (89 aa)) is disordered. Basic and acidic residues-rich tracts occupy residues 22-70 (EQPR…ERPE) and 83-93 (VEPRRPARPEP).

This sequence belongs to the SepF family. Homodimer. Interacts with FtsZ.

It is found in the cytoplasm. Functionally, cell division protein that is part of the divisome complex and is recruited early to the Z-ring. Probably stimulates Z-ring formation, perhaps through the cross-linking of FtsZ protofilaments. Its function overlaps with FtsA. In Micrococcus luteus (strain ATCC 4698 / DSM 20030 / JCM 1464 / CCM 169 / CCUG 5858 / IAM 1056 / NBRC 3333 / NCIMB 9278 / NCTC 2665 / VKM Ac-2230) (Micrococcus lysodeikticus), this protein is Cell division protein SepF.